The sequence spans 479 residues: Protein ORD (479 aa).

The segment at 102–140 (KEEETEPESESDLDEGPSTSKQALERMVQRAERKAKEAS) is disordered. Positions 104-116 (EETEPESESDLDE) are enriched in acidic residues. The span at 124–140 (ALERMVQRAERKAKEAS) shows a compositional bias: basic and acidic residues.

Interacts with Sce.

It localises to the nucleus. Its subcellular location is the chromosome. The protein localises to the centromere. Essential for proper maintenance of sister-chromatid cohesion in both male and female meiosis. Mutations in ord cause premature separation of the sister chromatids in meiosis I and random segregation in both meiotic divisions. Required for chiasma maintenance in female meiosis. Mutations in ord reduce recombination in female meiosis. The polypeptide is Protein ORD (ord) (Drosophila melanogaster (Fruit fly)).